The following is a 254-amino-acid chain: Glycerol operon regulatory protein (254 aa).

Residues 5 to 67 form the HTH iclR-type domain; it reads IQSLERAAAM…PASGRYQLGA (63 aa). The H-T-H motif DNA-binding region spans 27–46; sequence LSDIASTLGLAKGTAHGILR. In terms of domain architecture, IclR-ED spans 82-251; that stretch reads LRARALVWTD…AAAVSRDLGA (170 aa).

Functionally, may be an activator protein for the gylABX operon. The chain is Glycerol operon regulatory protein (gylR) from Streptomyces griseus.